The following is a 554-amino-acid chain: Glucose-6-phosphate isomerase (554 aa).

The Proton donor role is filled by glutamate 358. Catalysis depends on residues histidine 389 and lysine 515.

It belongs to the GPI family.

It is found in the cytoplasm. The enzyme catalyses alpha-D-glucose 6-phosphate = beta-D-fructose 6-phosphate. It participates in carbohydrate biosynthesis; gluconeogenesis. Its pathway is carbohydrate degradation; glycolysis; D-glyceraldehyde 3-phosphate and glycerone phosphate from D-glucose: step 2/4. Its function is as follows. Catalyzes the reversible isomerization of glucose-6-phosphate to fructose-6-phosphate. The sequence is that of Glucose-6-phosphate isomerase from Mycobacterium leprae (strain Br4923).